Reading from the N-terminus, the 729-residue chain is FYN-binding protein 2 (729 aa).

Disordered stretches follow at residues 18-130 (KFNA…EEKG), 170-320 (EGQK…SAEL), 371-408 (ELSP…PPKV), and 469-490 (VTKE…KTYD). Polar residues-rich tracts occupy residues 69-81 (GVSQ…TLKS), 89-99 (KTSSSSGTPEK), 190-216 (GAQT…SSVS), and 226-240 (KSPA…SQCQ). Over residues 275-284 (GPPPPKPSKP) the composition is skewed to pro residues. The span at 374-402 (PRPKEEENTMEEKESWESEPLEPRKELHP) shows a compositional bias: basic and acidic residues. Residues 473–485 (TPSPSTIRSSSSS) are compositionally biased toward low complexity. Y489 carries the phosphotyrosine modification. The SH2-binding; to LCP2 signature appears at 520 to 523 (YEDI). Residues 576 to 603 (DLGPRSQDDSQDGIIYDDVDTREKESND) are disordered. The segment covering 584 to 593 (DSQDGIIYDD) has biased composition (acidic residues). Position 591 is a phosphotyrosine (Y591). Positions 594–603 (VDTREKESND) are enriched in basic and acidic residues. One can recognise an SH3 domain in the interval 668–728 (LVINRAVACA…LVEHLDFKHQ (61 aa)).

Interacts with SKAP1, LCK and FYN. The phosphorylated form interacts with LCP2. Phosphorylation is required for its function in T-cell activation.

It localises to the membrane raft. Adapter protein that plays a role in T-cell receptor (TCR)-mediated activation of signaling pathways. Required for T-cell activation and integrin-mediated T-cell adhesion in response to TCR stimulation. The sequence is that of FYN-binding protein 2 from Mus musculus (Mouse).